The chain runs to 269 residues: uncharacterized protein (269 aa).

Residues 3 to 66 are a coiled coil; that stretch reads VDQAAIDEIL…QNLQNLAEGA (64 aa). Residues 83–142 form a disordered region; the sequence is AQIPEPPKPEPEVEQPETETGPEPEPEAEPELKEVKEDEPPEEDVVRELDESKSAEPIPE. Acidic residues predominate over residues 94 to 111; the sequence is EVEQPETETGPEPEPEAE. Residues 112–136 show a composition bias toward basic and acidic residues; the sequence is PELKEVKEDEPPEEDVVRELDESKS.

This is an uncharacterized protein from Archaeoglobus fulgidus (strain ATCC 49558 / DSM 4304 / JCM 9628 / NBRC 100126 / VC-16).